A 1315-amino-acid polypeptide reads, in one-letter code: Tetratricopeptide repeat protein 21B (1315 aa).

TPR repeat units follow at residues 108-141 (RKAL…PHDS), 145-178 (PILK…GNDI), 192-225 (QNYS…QLAL), 285-323 (AQLF…TPQQ), 324-357 (AEIA…NESN), 492-525 (PQAV…SPSY), 563-596 (PLYH…PGMR), 616-649 (LSIF…FSGT), 721-754 (PRSF…NPKD), 756-788 (TLAR…GQQN), 790-821 (LCYD…EPVS), 830-863 (GRSQ…QARI), 883-916 (AEIC…CETD), 918-950 (KIML…DQDN), 951-984 (EPAT…KPDN), 1022-1055 (PGFQ…SDWG), 1196-1229 (EKSW…NRSC), 1231-1263 (KAYE…SNQT), and 1265-1298 (PAVG…HPTY).

This sequence belongs to the TTC21 family. Component of the IFT complex A (IFT-A) complex. IFT-A complex is divided into a core subcomplex composed of IFT122:IFT140:WDR19 which is associated with TULP3 and a peripheral subcomplex composed of IFT43:WDR35:TTC21B. Interacts directy with WDR35 and TTC21B. Interacts with TTC25.

The protein localises to the cytoplasm. It localises to the cytoskeleton. Its subcellular location is the cilium axoneme. Component of the IFT complex A (IFT-A), a complex required for retrograde ciliary transport and entry into cilia of G protein-coupled receptors (GPCRs). Essential for retrograde trafficking of IFT-1, IFT-B and GPCRs. Negatively modulates the SHH signal transduction. In Mus musculus (Mouse), this protein is Tetratricopeptide repeat protein 21B (Ttc21b).